The chain runs to 434 residues: ATP-dependent RNA helicase RhlB (434 aa).

Positions 9–37 (KKFADFPLKPEILAALNENGFEFCTPIQA) match the Q motif motif. Positions 40 to 219 (LPILLNAKDI…YDHMNDPEKV (180 aa)) constitute a Helicase ATP-binding domain. 53 to 60 (AQTGTGKT) lines the ATP pocket. The DEAD box motif lies at 165 to 168 (DEAD). The Helicase C-terminal domain occupies 243–390 (KMRLLLSLIE…VSNYDKDALL (148 aa)). Residues 390-434 (LDDIPPPARIHRKPPTSRTRDGGSKGAHRSGGNTSRPPRHRTRRP) form a disordered region.

This sequence belongs to the DEAD box helicase family. RhlB subfamily. Component of the RNA degradosome, which is a multiprotein complex involved in RNA processing and mRNA degradation.

The protein localises to the cytoplasm. It carries out the reaction ATP + H2O = ADP + phosphate + H(+). Functionally, DEAD-box RNA helicase involved in RNA degradation. Has RNA-dependent ATPase activity and unwinds double-stranded RNA. The polypeptide is ATP-dependent RNA helicase RhlB (Shewanella frigidimarina (strain NCIMB 400)).